Reading from the N-terminus, the 101-residue chain is NAD(P)H-quinone oxidoreductase subunit 4L, chloroplastic (101 aa).

Transmembrane regions (helical) follow at residues 2–22 (MFEL…YGLI), 32–52 (ICLE…SDLF), and 61–81 (IFAI…LSIL).

It belongs to the complex I subunit 4L family. As to quaternary structure, NDH is composed of at least 16 different subunits, 5 of which are encoded in the nucleus.

The protein resides in the plastid. It is found in the chloroplast thylakoid membrane. It catalyses the reaction a plastoquinone + NADH + (n+1) H(+)(in) = a plastoquinol + NAD(+) + n H(+)(out). It carries out the reaction a plastoquinone + NADPH + (n+1) H(+)(in) = a plastoquinol + NADP(+) + n H(+)(out). Its function is as follows. NDH shuttles electrons from NAD(P)H:plastoquinone, via FMN and iron-sulfur (Fe-S) centers, to quinones in the photosynthetic chain and possibly in a chloroplast respiratory chain. The immediate electron acceptor for the enzyme in this species is believed to be plastoquinone. Couples the redox reaction to proton translocation, and thus conserves the redox energy in a proton gradient. The polypeptide is NAD(P)H-quinone oxidoreductase subunit 4L, chloroplastic (Lolium perenne (Perennial ryegrass)).